Reading from the N-terminus, the 495-residue chain is Probable cytochrome P450 513C1 (495 aa).

A helical membrane pass occupies residues 1–21 (MNYLVLILVSLVSIYFLFIKN). Cys-441 contributes to the heme binding site.

This sequence belongs to the cytochrome P450 family. Requires heme as cofactor.

The protein resides in the membrane. The sequence is that of Probable cytochrome P450 513C1 (cyp513C1) from Dictyostelium discoideum (Social amoeba).